The primary structure comprises 700 residues: Elongation factor G (700 aa).

Positions 8 to 290 (ERYRNIGISA…AVVEYLPSPV (283 aa)) constitute a tr-type G domain. GTP contacts are provided by residues 17 to 24 (AHIDAGKT), 88 to 92 (DTPGH), and 142 to 145 (NKMD).

It belongs to the TRAFAC class translation factor GTPase superfamily. Classic translation factor GTPase family. EF-G/EF-2 subfamily.

The protein resides in the cytoplasm. Catalyzes the GTP-dependent ribosomal translocation step during translation elongation. During this step, the ribosome changes from the pre-translocational (PRE) to the post-translocational (POST) state as the newly formed A-site-bound peptidyl-tRNA and P-site-bound deacylated tRNA move to the P and E sites, respectively. Catalyzes the coordinated movement of the two tRNA molecules, the mRNA and conformational changes in the ribosome. The protein is Elongation factor G of Mannheimia succiniciproducens (strain KCTC 0769BP / MBEL55E).